The following is a 386-amino-acid chain: MHARGPHGQLSPALPLASSVLMLLMSTLWLVGAGPGLVLAPELLLDPWQVHRLLTHALGHTALPGLLLSLLLLPTVGWQQECHLGTLRFLHASALLALASGLLAVLLAGLGLSSAAGSCGYMPVHLAMLAGEGHRPRRPRGALPPWLSPWLLLALTPLLSSEPPFLQLLCGLLAGLAYAAGAFRWLEPSERRLQVLQEGVLCRTLAGCWPLRLLATPGSLAELPVTHPAGVRPPIPGPPYVASPDLWSHWEDSALPPPSLRPVQPTWEGSSEAGLDWAGASFSPGTPMWAALDEQMLQEGIQASLLDGPAQEPQSAPWLSKSSVSSLRLQQLERMGFPTEQAVVALAATGRVEGAVSLLVGGQVGTETLVTHGKGGPAHSEGPGPP.

5 helical membrane-spanning segments follow: residues 20 to 40, 58 to 78, 92 to 112, 141 to 161, and 163 to 183; these read VLML…LVLA, LGHT…TVGW, ASAL…GLGL, GALP…LLSS, and PPFL…AGAF. Residues 324 to 362 enclose the UBA domain; that stretch reads VSSLRLQQLERMGFPTEQAVVALAATGRVEGAVSLLVGG.

Its subcellular location is the membrane. This Homo sapiens (Human) protein is Rhomboid domain-containing protein 3 (RHBDD3).